Reading from the N-terminus, the 143-residue chain is Large ribosomal subunit protein uL15 (143 aa).

Positions 1–52 are disordered; sequence MKLNTLAPAAGSKSAPKRLGRGIGSGLGKTSGKGHKGQKARSGGYHKVGFEG. A compositionally biased stretch (gly residues) spans 21–31; sequence RGIGSGLGKTS.

This sequence belongs to the universal ribosomal protein uL15 family. Part of the 50S ribosomal subunit.

Functionally, binds to the 23S rRNA. In Francisella tularensis subsp. holarctica (strain FTNF002-00 / FTA), this protein is Large ribosomal subunit protein uL15.